The sequence spans 314 residues: Olfactory receptor 9A1 (314 aa).

Over 1–24 (MLGNYSSATEFFLLGFPGSQEVCR) the chain is Extracellular. A glycan (N-linked (GlcNAc...) asparagine) is linked at asparagine 4. A helical membrane pass occupies residues 25-45 (ILFATFFLLYAVTVMGNVVII). Residues 46–64 (ITVCVDKCLQSPIYFFLGH) lie on the Cytoplasmic side of the membrane. Residues 65–85 (LCVLEILITSTAVPFMLWGLL) form a helical membrane-spanning segment. Residues 86-99 (LPSTQIMSLTACAA) lie on the Extracellular side of the membrane. A disulfide bridge connects residues cysteine 97 and cysteine 179. A helical membrane pass occupies residues 100 to 120 (QLYLYLSLGTLELALMGVMAV). The Cytoplasmic portion of the chain corresponds to 121–140 (DRYVAVCNPLRYNIIMNSST). The helical transmembrane segment at 141-161 (FIWVIIVSWVLGFLSEIWPVY) threads the bilayer. At 162-196 (ATFQLTFCKSSVLDHFYCDRGQLLKVSCEDTLFRE) the chain is on the extracellular side. The chain crosses the membrane as a helical span at residues 197 to 217 (FILFLMAVFIIIGSLIPTIVS). At 218-239 (YTYIISTNLKIPSASGWRKSFS) the chain is on the cytoplasmic side. The helical transmembrane segment at 240–260 (TCASHFTYVVIGYGSCLFLYV) threads the bilayer. Over 261 to 271 (KPKQTQAAEYN) the chain is Extracellular. A helical transmembrane segment spans residues 272 to 292 (RVVSLLVLVVTPFLNPFIFTL). Residues 293 to 314 (RNDKFIQAFGDGMKHCYKLLKN) are Cytoplasmic-facing.

It belongs to the G-protein coupled receptor 1 family.

It localises to the cell membrane. Odorant receptor. This Homo sapiens (Human) protein is Olfactory receptor 9A1 (OR9A1P).